Here is a 269-residue protein sequence, read N- to C-terminus: Hydroxyethylthiazole kinase (269 aa).

Met42 contributes to the substrate binding site. 2 residues coordinate ATP: Arg118 and Ser164. Gly191 is a binding site for substrate.

This sequence belongs to the Thz kinase family. Requires Mg(2+) as cofactor.

The enzyme catalyses 5-(2-hydroxyethyl)-4-methylthiazole + ATP = 4-methyl-5-(2-phosphooxyethyl)-thiazole + ADP + H(+). Its pathway is cofactor biosynthesis; thiamine diphosphate biosynthesis; 4-methyl-5-(2-phosphoethyl)-thiazole from 5-(2-hydroxyethyl)-4-methylthiazole: step 1/1. Its function is as follows. Catalyzes the phosphorylation of the hydroxyl group of 4-methyl-5-beta-hydroxyethylthiazole (THZ). The chain is Hydroxyethylthiazole kinase from Listeria monocytogenes serotype 4b (strain F2365).